The chain runs to 467 residues: Argininosuccinate lyase (467 aa).

The protein belongs to the lyase 1 family. Argininosuccinate lyase subfamily.

It localises to the cytoplasm. It catalyses the reaction 2-(N(omega)-L-arginino)succinate = fumarate + L-arginine. It participates in amino-acid biosynthesis; L-arginine biosynthesis; L-arginine from L-ornithine and carbamoyl phosphate: step 3/3. The chain is Argininosuccinate lyase from Anaeromyxobacter dehalogenans (strain 2CP-C).